A 367-amino-acid polypeptide reads, in one-letter code: Palmitoyltransferase ZDHHC2 (367 aa).

Residues 1–16 are Cytoplasmic-facing; it reads MAPSGPGSSARRRCRR. Residues 17–37 form a helical membrane-spanning segment; the sequence is VLYWIPVVFITLLLGWSYYAY. The Lumenal segment spans residues 38 to 54; it reads AIQLCIVSMENTGEQVV. The helical transmembrane segment at 55 to 75 threads the bilayer; sequence CLMAYHLLFAMFVWSYWKTIF. The Cytoplasmic portion of the chain corresponds to 76–170; sequence TLPMNPSKEF…NNCVGFSNYK (95 aa). Residues 127 to 177 form the DHHC domain; sequence RYCDRCQLIKPDRCHHCSVCDKCILKMDHHCPWVNNCVGFSNYKFFLLFLA. Catalysis depends on Cys-157, which acts as the S-palmitoyl cysteine intermediate. A helical membrane pass occupies residues 171–191; it reads FFLLFLAYSLLYCLFIAATDL. The Lumenal portion of the chain corresponds to 192 to 208; sequence QYFIKFWTNGLPDTQAK. The chain crosses the membrane as a helical span at residues 209 to 229; that stretch reads FHIMFLFFAAAMFSVSLSSLF. Residues 230–367 lie on the Cytoplasmic side of the membrane; sequence GYHCWLVSKN…NPALTMENET (138 aa). The interval 299-367 is mediates localization to plasma membrane and recycling endosomes; that stretch reads NQDPEQASTP…NPALTMENET (69 aa). The interval 330–367 is disordered; that stretch reads ESQSHLLTDSQSWTESSINPGKCKAGMSNPALTMENET. A compositionally biased stretch (polar residues) spans 333 to 348; that stretch reads SHLLTDSQSWTESSIN. The Non-canonical dileucine endocytic signal signature appears at 335-336; the sequence is LL. The residue at position 341 (Ser-341) is a Phosphoserine. The short motif at 358 to 361 is the NPxY-like endocytic signal element; it reads NPAL.

The protein belongs to the DHHC palmitoyltransferase family. Monomer. Homodimer. The monomeric form has a higher catalytic activity. Autopalmitoylated. As to expression, ubiquitously expressed. Reduced expression in colorectal cancers with liver metastasis.

The protein resides in the postsynaptic density. It is found in the postsynaptic recycling endosome membrane. It localises to the cell membrane. The protein localises to the endoplasmic reticulum membrane. Its subcellular location is the golgi apparatus membrane. It catalyses the reaction L-cysteinyl-[protein] + hexadecanoyl-CoA = S-hexadecanoyl-L-cysteinyl-[protein] + CoA. The catalysed reaction is L-cysteinyl-[protein] + tetradecanoyl-CoA = S-tetradecanoyl-L-cysteinyl-[protein] + CoA. It carries out the reaction L-cysteinyl-[protein] + octadecanoyl-CoA = S-octadecanoyl-L-cysteinyl-[protein] + CoA. Its function is as follows. Palmitoyltransferase that catalyzes the addition of palmitate onto various protein substrates and is involved in a variety of cellular processes. Has no stringent fatty acid selectivity and in addition to palmitate can also transfer onto target proteins myristate from tetradecanoyl-CoA and stearate from octadecanoyl-CoA. In the nervous system, plays a role in long term synaptic potentiation by palmitoylating AKAP5 through which it regulates protein trafficking from the dendritic recycling endosomes to the plasma membrane and controls both structural and functional plasticity at excitatory synapses. In dendrites, mediates the palmitoylation of DLG4 when synaptic activity decreases and induces synaptic clustering of DLG4 and associated AMPA-type glutamate receptors. Also mediates the de novo and turnover palmitoylation of RGS7BP, a shuttle for Gi/o-specific GTPase-activating proteins/GAPs, promoting its localization to the plasma membrane in response to the activation of G protein-coupled receptors. Through the localization of these GTPase-activating proteins/GAPs, it also probably plays a role in G protein-coupled receptors signaling in neurons. Also probably plays a role in cell adhesion by palmitoylating CD9 and CD151 to regulate their expression and function. Palmitoylates the endoplasmic reticulum protein CKAP4 and regulates its localization to the plasma membrane. Could also palmitoylate LCK and regulate its localization to the plasma membrane. In terms of biological role, (Microbial infection) Promotes Chikungunya virus (CHIKV) replication by mediating viral nsp1 palmitoylation. The sequence is that of Palmitoyltransferase ZDHHC2 from Homo sapiens (Human).